The following is an 83-amino-acid chain: Putative defensin-like protein 111 (83 aa).

An N-terminal signal peptide occupies residues 1–24 (MAITKKILLPFVLTILFVISSVHC). 4 cysteine pairs are disulfide-bonded: Cys-40–Cys-80, Cys-46–Cys-69, Cys-54–Cys-78, and Cys-58–Cys-79.

It belongs to the DEFL family.

It is found in the secreted. This is Putative defensin-like protein 111 (LCR50) from Arabidopsis thaliana (Mouse-ear cress).